The following is a 138-amino-acid chain: Homeobox protein HD-11 (138 aa).

Residues cysteine 30–glycine 89 constitute a DNA-binding region (homeobox).

It localises to the nucleus. The chain is Homeobox protein HD-11 (HD-11) from Encephalitozoon cuniculi (strain GB-M1) (Microsporidian parasite).